We begin with the raw amino-acid sequence, 155 residues long: Cytochrome c oxidase subunit 4, mitochondrial (155 aa).

A mitochondrion-targeting transit peptide spans 1-25 (MLSLRQSIRFFKPATRTLCSSRYLL). At Thr55 the chain carries Phosphothreonine. Cys111, His119, Cys134, and Cys137 together coordinate Zn(2+).

Belongs to the cytochrome c oxidase subunit 5B family. In terms of assembly, component of the cytochrome c oxidase (complex IV, CIV), a multisubunit enzyme composed of 12 subunits. The complex is composed of a catalytic core of 3 subunits COX1, COX2 and COX3, encoded in the mitochondrial DNA, and 9 supernumerary subunits COX4, COX5A (or COX5B), COX6, COX7, COX8, COX9, COX12, COX13 and COX26, which are encoded in the nuclear genome. The complex exists as a monomer or a dimer and forms supercomplexes (SCs) in the inner mitochondrial membrane with a dimer of ubiquinol-cytochrome c oxidoreductase (cytochrome b-c1 complex, complex III, CIII), resulting in 2 different assemblies (supercomplexes III(2)IV and III(2)IV(2)).

Its subcellular location is the mitochondrion inner membrane. It functions in the pathway energy metabolism; oxidative phosphorylation. In terms of biological role, component of the cytochrome c oxidase, the last enzyme in the mitochondrial electron transport chain which drives oxidative phosphorylation. The respiratory chain contains 3 multisubunit complexes succinate dehydrogenase (complex II, CII), ubiquinol-cytochrome c oxidoreductase (cytochrome b-c1 complex, complex III, CIII) and cytochrome c oxidase (complex IV, CIV), that cooperate to transfer electrons derived from NADH and succinate to molecular oxygen, creating an electrochemical gradient over the inner membrane that drives transmembrane transport and the ATP synthase. Cytochrome c oxidase is the component of the respiratory chain that catalyzes the reduction of oxygen to water. Electrons originating from reduced cytochrome c in the intermembrane space (IMS) are transferred via the dinuclear copper A center (CU(A)) of COX2 and heme A of COX1 to the active site in COX1, a binuclear center (BNC) formed by heme A3 and copper B (CU(B)). The BNC reduces molecular oxygen to 2 water molecules using 4 electrons from cytochrome c in the IMS and 4 protons from the mitochondrial matrix. This chain is Cytochrome c oxidase subunit 4, mitochondrial (COX4), found in Saccharomyces cerevisiae (strain ATCC 204508 / S288c) (Baker's yeast).